We begin with the raw amino-acid sequence, 461 residues long: MLKIYNTLTRQKEEFKPITAGKVGMYVCGVTIYDLCHIGHGRTFVSFDVVTRYLRYLGYDLNFVRNITDIDDKIIKRANENGESCDSLTERLIGEMHADFDALNMKRPDVEPRATEFITEIIELVEKLIQRGFAYVASNGDVMFEVKKFDEYGKLSKQDLDQLQAGARVDIDSAKRSPLDFVLWKMSKPGEPTWESPWGPGRPGWHIECSAMNSSILGNHFDIHGGGSDLQFPHHENEIAQSCCAHGTQYVNTWMHSGMVMVDREKMSKSLGNFFTIRDVLQHYDAETVRYFLMSGHYRSQLNYSEDNLNQARASLERLYTSLRGLDVTAAPAGGEEYVTRFSTAMNDDFNTPEAYSVLFEMAREINRIKTESIEKASALGALMRELADIIGILHQDPEAFLQGDAAGNDDEVAEIEGLIKLRNDSRASKDWANADLARDKLNELGIVLEDGPEGTTWRRK.

A Zn(2+)-binding site is contributed by Cys-28. The short motif at 30–40 is the 'HIGH' region element; that stretch reads VTIYDLCHIGH. Zn(2+) is bound by residues Cys-209, His-234, and Glu-238. Residues 266–270 carry the 'KMSKS' region motif; that stretch reads KMSKS. Lys-269 contributes to the ATP binding site.

This sequence belongs to the class-I aminoacyl-tRNA synthetase family. As to quaternary structure, monomer. Zn(2+) is required as a cofactor.

Its subcellular location is the cytoplasm. The catalysed reaction is tRNA(Cys) + L-cysteine + ATP = L-cysteinyl-tRNA(Cys) + AMP + diphosphate. The chain is Cysteine--tRNA ligase from Vibrio atlanticus (strain LGP32) (Vibrio splendidus (strain Mel32)).